Here is a 153-residue protein sequence, read N- to C-terminus: Transcriptional repressor NrdR (153 aa).

The segment at 3–34 is a zinc-finger region; the sequence is CPFCGYEDSKVVDTRPTNEGKTIKRRRECLKC. Positions 49-139 constitute an ATP-cone domain; that stretch reads ILVIKKDNRR…VYRQFKDINT (91 aa).

It belongs to the NrdR family. Requires Zn(2+) as cofactor.

In terms of biological role, negatively regulates transcription of bacterial ribonucleotide reductase nrd genes and operons by binding to NrdR-boxes. This is Transcriptional repressor NrdR from Caldicellulosiruptor bescii (strain ATCC BAA-1888 / DSM 6725 / KCTC 15123 / Z-1320) (Anaerocellum thermophilum).